Here is an 863-residue protein sequence, read N- to C-terminus: Ubiquitin carboxyl-terminal hydrolase 13 (863 aa).

Serine 114 is subject to Phosphoserine. Threonine 122 is modified (phosphothreonine). Residues 187–295 form a UBP-type; degenerate zinc finger; sequence PVSKYANNLT…KHLAHFGIDM (109 aa). Zn(2+) is bound by residues cysteine 211, cysteine 214, cysteine 231, and histidine 244. Lysine 311 participates in a covalent cross-link: Glycyl lysine isopeptide (Lys-Gly) (interchain with G-Cter in SUMO2). Residues 336–861 form the USP domain; it reads TGLKNLGNSC…LGYMYFYRRI (526 aa). Cysteine 345 acts as the Nucleophile in catalysis. A Glycyl lysine isopeptide (Lys-Gly) (interchain with G-Cter in SUMO2) cross-link involves residue lysine 405. UBA domains lie at 652–693 and 727–767; these read DIDE…IVVH and QPPE…IFSH. Catalysis depends on histidine 823, which acts as the Proton acceptor.

It belongs to the peptidase C19 family. As to quaternary structure, interacts with UFD1. Interacts (via UBA domains) with SIAH2 (when ubiquitinated). Interacts with BAG6; the interaction is direct and may mediate UBL4A deubiquitination. Interacts (via UBA 2 domain) with AMFR; the interaction is direct. Interacts with UBL4A; may be indirect via BAG6. Interacts with NEDD4.

The protein resides in the cytoplasm. The enzyme catalyses Thiol-dependent hydrolysis of ester, thioester, amide, peptide and isopeptide bonds formed by the C-terminal Gly of ubiquitin (a 76-residue protein attached to proteins as an intracellular targeting signal).. With respect to regulation, specifically inhibited by spautin-1 (specific and potent autophagy inhibitor-1), a derivative of MBCQ that binds to USP13 and inhibits deubiquitinase activity. Regulated by PIK3C3/VPS34-containing complexes. The weak deubiquitinase activity in vitro suggests the existence of some mechanism that activates the enzyme. Its function is as follows. Deubiquitinase that mediates deubiquitination of target proteins such as BECN1, MITF, SKP2 and USP10 and is involved in various processes such as autophagy, endoplasmic reticulum-associated degradation (ERAD), cell cycle progression or DNA damage response. Component of a regulatory loop that controls autophagy and p53/TP53 levels: mediates deubiquitination of BECN1, a key regulator of autophagy, leading to stabilize the PIK3C3/VPS34-containing complexes. Alternatively, forms with NEDD4 a deubiquitination complex, which subsequently stabilizes VPS34 to promote autophagy. Also deubiquitinates USP10, an essential regulator of p53/TP53 stability. In turn, PIK3C3/VPS34-containing complexes regulate USP13 stability, suggesting the existence of a regulatory system by which PIK3C3/VPS34-containing complexes regulate p53/TP53 protein levels via USP10 and USP13. Recruited by nuclear UFD1 and mediates deubiquitination of SKP2, thereby regulating endoplasmic reticulum-associated degradation (ERAD). Also regulates ERAD through the deubiquitination of UBL4A a component of the BAG6/BAT3 complex. Mediates stabilization of SIAH2 independently of deubiquitinase activity: binds ubiquitinated SIAH2 and acts by impairing SIAH2 autoubiquitination. Regulates the cell cycle progression by stabilizing cell cycle proteins such as SKP2 and AURKB. In addition, plays an important role in maintaining genomic stability and in DNA replication checkpoint activation via regulation of RAP80 and TOPBP1. Deubiquitinates the multifunctional protein HMGB1 and subsequently drives its nucleocytoplasmic localization and its secretion. Positively regulates type I and type II interferon signalings by deubiquitinating STAT1 but negatively regulates antiviral response by deubiquitinating STING1. This is Ubiquitin carboxyl-terminal hydrolase 13 (USP13) from Bos taurus (Bovine).